Consider the following 433-residue polypeptide: Ribosomal RNA small subunit methyltransferase B (433 aa).

S-adenosyl-L-methionine contacts are provided by residues C254–K260, D277, D303, and D322. The active-site Nucleophile is C375.

This sequence belongs to the class I-like SAM-binding methyltransferase superfamily. RsmB/NOP family.

Its subcellular location is the cytoplasm. It catalyses the reaction cytidine(967) in 16S rRNA + S-adenosyl-L-methionine = 5-methylcytidine(967) in 16S rRNA + S-adenosyl-L-homocysteine + H(+). Specifically methylates the cytosine at position 967 (m5C967) of 16S rRNA. The sequence is that of Ribosomal RNA small subunit methyltransferase B from Sodalis glossinidius (strain morsitans).